The following is a 90-amino-acid chain: Progonadoliberin-1 (90 aa).

A signal peptide spans 1–24; it reads MSRHVTVVLLLAIVLLLSSHMIHG. Q25 is modified (pyrrolidone carboxylic acid). Glycine amide is present on G34.

This sequence belongs to the GnRH family. In terms of tissue distribution, forebrain.

It localises to the secreted. Its function is as follows. Stimulates the secretion of gonadotropins. The chain is Progonadoliberin-1 (gnrh1) from Aquarana catesbeiana (American bullfrog).